The primary structure comprises 255 residues: Hydroxyacylglutathione hydrolase (255 aa).

Residues His-56, His-58, Asp-60, His-61, His-114, Asp-133, and His-171 each contribute to the Zn(2+) site.

It belongs to the metallo-beta-lactamase superfamily. Glyoxalase II family. Monomer. Requires Zn(2+) as cofactor.

It catalyses the reaction an S-(2-hydroxyacyl)glutathione + H2O = a 2-hydroxy carboxylate + glutathione + H(+). It functions in the pathway secondary metabolite metabolism; methylglyoxal degradation; (R)-lactate from methylglyoxal: step 2/2. In terms of biological role, thiolesterase that catalyzes the hydrolysis of S-D-lactoyl-glutathione to form glutathione and D-lactic acid. In Bradyrhizobium sp. (strain ORS 278), this protein is Hydroxyacylglutathione hydrolase.